The sequence spans 480 residues: Cysteine--tRNA ligase (480 aa).

C27 is a binding site for Zn(2+). Residues 29–39 carry the 'HIGH' region motif; that stretch reads PTVYNYAHIGN. Zn(2+) is bound by residues C221, H246, and E250. The 'KMSKS' region signature appears at 278 to 282; sequence KMSKS. K281 lines the ATP pocket.

Belongs to the class-I aminoacyl-tRNA synthetase family. Monomer. Zn(2+) is required as a cofactor.

The protein localises to the cytoplasm. The catalysed reaction is tRNA(Cys) + L-cysteine + ATP = L-cysteinyl-tRNA(Cys) + AMP + diphosphate. In Borreliella burgdorferi (strain ZS7) (Borrelia burgdorferi), this protein is Cysteine--tRNA ligase.